A 483-amino-acid polypeptide reads, in one-letter code: Iroquois-class homeodomain protein IRX-5 (483 aa).

A DNA-binding region (homeobox; TALE-type) is located at residues 113–175 (DPAYRKNATR…NARRRLKKEN (63 aa)). 2 disordered regions span residues 177 to 392 (MTWT…QCPF) and 423 to 442 (GHPGPGPGPTTGPGSHFNGL). Residues 186 to 203 (EDEEEEENIDLEKNDEDE) are compositionally biased toward acidic residues. 2 stretches are compositionally biased toward basic and acidic residues: residues 204 to 213 (PQKPEDKGDP) and 250 to 261 (SDFKEPPSEGRL). 2 stretches are compositionally biased toward low complexity: residues 266–282 (GPPRTGGPSPAGPAAAR) and 374–388 (SRASPAPAPSRSPSA). At Ser-274 the chain carries Phosphoserine. Phosphoserine is present on Ser-464.

It belongs to the TALE/IRO homeobox family.

Its subcellular location is the nucleus. Functionally, establishes the cardiac repolarization gradient by its repressive actions on the KCND2 potassium-channel gene. Required for retinal cone bipolar cell differentiation. May regulate contrast adaptation in the retina and control specific aspects of visual function in circuits of the mammalian retina. Could be involved in the regulation of both the cell cycle and apoptosis in prostate cancer cells. Involved in craniofacial and gonadal development. Modulates the migration of progenitor cell populations in branchial arches and gonads by repressing CXCL12. This Homo sapiens (Human) protein is Iroquois-class homeodomain protein IRX-5 (IRX5).